Consider the following 360-residue polypeptide: MAKPKFIALALVALSFLSIAQSIPFTEKDLASEDSLWNLYEKWRTHHTVARDLDEKNRRFNVFKENVKFIHEFNQKKDAPYKLALNKFGDMTNQEFRSKYAGSKIQHHRSQRGIQKNTGSFMYENVGSLPAASIDWRAKGAVTGVKDQGQCGSCWAFSTIASVEGINQIKTGELVSLSEQELVDCDTSYNEGCNGGLMDYAFEFIQKNGITTEDSYPYAEQDGTCASNLLNSPVVSIDGHQDVPANNENALMQAVANQPISVSIEASGYGFQFYSEGVFTGRCGTELDHGVAIVGYGATRDGTKYWIVKNSWGEEWGESGYIRMQRGISDKRGKCGIAMEASYPIKTSANPKNSSTRDEL.

The signal sequence occupies residues 1–20; sequence MAKPKFIALALVALSFLSIA. Positions 21 to 133 are cleaved as a propeptide — activation peptide; sequence QSIPFTEKDL…ENVGSLPAAS (113 aa). 3 disulfide bridges follow: C151-C193, C185-C225, and C283-C335. C154 is a catalytic residue. Residues H289 and N310 contribute to the active site. Residue N353 is glycosylated (N-linked (GlcNAc...) asparagine). Positions 357–360 match the Prevents secretion from ER motif; the sequence is RDEL.

Belongs to the peptidase C1 family.

It localises to the endoplasmic reticulum lumen. The polypeptide is Thiol protease SEN102 (SEN102) (Hemerocallis sp. (Daylily)).